A 150-amino-acid polypeptide reads, in one-letter code: Cilia- and flagella-associated protein 68 (150 aa).

Mn regions lie at residues 99–110 and 140–150; these read TTYDTSYNNKMP and KSTYMNSYSKP.

The protein belongs to the CFAP68 family. As to quaternary structure, microtubule inner protein component of sperm flagellar doublet microtubules.

It is found in the cytoplasm. The protein resides in the cytoskeleton. The protein localises to the cilium axoneme. It localises to the flagellum axoneme. Its subcellular location is the nucleus. It is found in the cell projection. The protein resides in the cilium. Its function is as follows. Microtubule inner protein (MIP) part of the dynein-decorated doublet microtubules (DMTs) in cilia axoneme, which is required for motile cilia beating. The chain is Cilia- and flagella-associated protein 68 from Homo sapiens (Human).